The primary structure comprises 510 residues: Bifunctional purine biosynthesis protein PurH (510 aa).

Positions 1-142 (MRALISVSDK…KNFKDVLIVT (142 aa)) constitute an MGS-like domain.

The protein belongs to the PurH family.

It catalyses the reaction (6R)-10-formyltetrahydrofolate + 5-amino-1-(5-phospho-beta-D-ribosyl)imidazole-4-carboxamide = 5-formamido-1-(5-phospho-D-ribosyl)imidazole-4-carboxamide + (6S)-5,6,7,8-tetrahydrofolate. It carries out the reaction IMP + H2O = 5-formamido-1-(5-phospho-D-ribosyl)imidazole-4-carboxamide. The protein operates within purine metabolism; IMP biosynthesis via de novo pathway; 5-formamido-1-(5-phospho-D-ribosyl)imidazole-4-carboxamide from 5-amino-1-(5-phospho-D-ribosyl)imidazole-4-carboxamide (10-formyl THF route): step 1/1. Its pathway is purine metabolism; IMP biosynthesis via de novo pathway; IMP from 5-formamido-1-(5-phospho-D-ribosyl)imidazole-4-carboxamide: step 1/1. The chain is Bifunctional purine biosynthesis protein PurH from Campylobacter curvus (strain 525.92).